We begin with the raw amino-acid sequence, 532 residues long: Probable cyclic di-GMP phosphodiesterase PdeD (532 aa).

A run of 2 helical transmembrane segments spans residues 16–36 (MIVC…VRFI) and 245–265 (LPLA…ATAY). The region spanning 266–515 (RMSFSREINL…DFPKWLAGSQ (250 aa)) is the EAL domain.

The protein resides in the cell membrane. It catalyses the reaction 3',3'-c-di-GMP + H2O = 5'-phosphoguanylyl(3'-&gt;5')guanosine + H(+). In terms of biological role, phosphodiesterase (PDE) that catalyzes the hydrolysis of cyclic-di-GMP (c-di-GMP) to 5'-pGpG. May serve as a negative regulator of cellulose synthesis (as has been suggested for S.typhimurium); overexpression inhibits cell aggregation in strains able to produce adhesive curli fimbriae. Cyclic-di-GMP is a second messenger which controls cell surface-associated traits in bacteria. The chain is Probable cyclic di-GMP phosphodiesterase PdeD from Escherichia coli (strain K12).